The chain runs to 238 residues: Ribonuclease 3 (238 aa).

In terms of domain architecture, RNase III spans Pro-4–Gly-134. Residue Glu-44 participates in Mg(2+) binding. Asp-48 is an active-site residue. Mg(2+) contacts are provided by Asp-120 and Glu-123. The active site involves Glu-123. The DRBM domain maps to Asp-161 to Val-229.

Belongs to the ribonuclease III family. As to quaternary structure, homodimer. It depends on Mg(2+) as a cofactor.

The protein resides in the cytoplasm. The enzyme catalyses Endonucleolytic cleavage to 5'-phosphomonoester.. In terms of biological role, digests double-stranded RNA. Involved in the processing of primary rRNA transcript to yield the immediate precursors to the large and small rRNAs (23S and 16S). Processes some mRNAs, and tRNAs when they are encoded in the rRNA operon. Processes pre-crRNA and tracrRNA of type II CRISPR loci if present in the organism. This chain is Ribonuclease 3, found in Mycobacterium leprae (strain TN).